A 300-amino-acid chain; its full sequence is Probable alpha-L-glutamate ligase (300 aa).

Residues 104–287 enclose the ATP-grasp domain; sequence LQLLARQGID…IAGRMIQWIE (184 aa). ATP contacts are provided by residues lysine 141, 178–179, aspartate 187, and 211–213; these read EY and RSN. 3 residues coordinate Mg(2+): aspartate 248, glutamate 260, and asparagine 262. Mn(2+)-binding residues include aspartate 248, glutamate 260, and asparagine 262.

It belongs to the RimK family. It depends on Mg(2+) as a cofactor. Mn(2+) serves as cofactor.

The chain is Probable alpha-L-glutamate ligase from Citrobacter koseri (strain ATCC BAA-895 / CDC 4225-83 / SGSC4696).